The following is a 706-amino-acid chain: Parasporal crystal protein Cry18Aa (706 aa).

It belongs to the delta endotoxin family.

Functionally, binds to the brush border membrane vesicles of scarab larvae and somehow damages the gut wall to allow the vegetative cells of P.popilliae to enter the hemolymph. Active on M.melolontha. The polypeptide is Parasporal crystal protein Cry18Aa (cry18Aa) (Paenibacillus popilliae (Bacillus popilliae)).